The chain runs to 206 residues: Large ribosomal subunit protein uL4 (206 aa).

The segment at 62-85 (KPWRQKGTGRARQGSTRSPQFRGG) is disordered.

The protein belongs to the universal ribosomal protein uL4 family. In terms of assembly, part of the 50S ribosomal subunit.

Its function is as follows. One of the primary rRNA binding proteins, this protein initially binds near the 5'-end of the 23S rRNA. It is important during the early stages of 50S assembly. It makes multiple contacts with different domains of the 23S rRNA in the assembled 50S subunit and ribosome. Functionally, forms part of the polypeptide exit tunnel. This Rhodospirillum centenum (strain ATCC 51521 / SW) protein is Large ribosomal subunit protein uL4.